The primary structure comprises 372 residues: Probable NADH-dependent flavin oxidoreductase YqiG (372 aa).

This sequence belongs to the NADH:flavin oxidoreductase/NADH oxidase family.

This chain is Probable NADH-dependent flavin oxidoreductase YqiG (yqiG), found in Bacillus subtilis (strain 168).